Reading from the N-terminus, the 155-residue chain is MMIDQNKIIGQEKNALLTHFNLDDVDKLVISLKKIGRENFDKVCILIKINKRIVFFHAGTQTTNENNLWIHKKANVVDKFDHSSLFEKAIYEENPDKFYINNGLSRRDYAIVGGGFPIGLESTGIIGSLIVSGLTDTEDHDLAYQALIDIQSQQS.

This sequence belongs to the UPF0303 family.

This Lactiplantibacillus plantarum (strain ATCC BAA-793 / NCIMB 8826 / WCFS1) (Lactobacillus plantarum) protein is UPF0303 protein lp_3613.